The chain runs to 316 residues: Aspartate carbamoyltransferase catalytic subunit (316 aa).

Arg58 and Thr59 together coordinate carbamoyl phosphate. An L-aspartate-binding site is contributed by Lys86. Carbamoyl phosphate is bound by residues Arg108, His136, and Gln139. Arg169 and Arg223 together coordinate L-aspartate. Residues Gly265 and Pro266 each coordinate carbamoyl phosphate.

The protein belongs to the aspartate/ornithine carbamoyltransferase superfamily. ATCase family. Heterododecamer (2C3:3R2) of six catalytic PyrB chains organized as two trimers (C3), and six regulatory PyrI chains organized as three dimers (R2).

It catalyses the reaction carbamoyl phosphate + L-aspartate = N-carbamoyl-L-aspartate + phosphate + H(+). It functions in the pathway pyrimidine metabolism; UMP biosynthesis via de novo pathway; (S)-dihydroorotate from bicarbonate: step 2/3. Catalyzes the condensation of carbamoyl phosphate and aspartate to form carbamoyl aspartate and inorganic phosphate, the committed step in the de novo pyrimidine nucleotide biosynthesis pathway. The sequence is that of Aspartate carbamoyltransferase catalytic subunit from Anaeromyxobacter sp. (strain Fw109-5).